A 79-amino-acid chain; its full sequence is Putative membrane protein insertion efficiency factor (79 aa).

The protein belongs to the UPF0161 family.

Its subcellular location is the cell inner membrane. In terms of biological role, could be involved in insertion of integral membrane proteins into the membrane. In Cytophaga hutchinsonii (strain ATCC 33406 / DSM 1761 / CIP 103989 / NBRC 15051 / NCIMB 9469 / D465), this protein is Putative membrane protein insertion efficiency factor.